The sequence spans 297 residues: D-alanine--D-alanine ligase (297 aa).

Positions 95–294 (KMLWKAFGLP…FEQLVVKILE (200 aa)) constitute an ATP-grasp domain. 125–180 (VAKLGLPLMVKPSLEGSSVGLTKVKAVEELKSAVEYALKFDNTILIEEWLAGDELT) is a binding site for ATP. The Mg(2+) site is built by D248, E261, and N263.

The protein belongs to the D-alanine--D-alanine ligase family. The cofactor is Mg(2+). It depends on Mn(2+) as a cofactor.

The protein resides in the cytoplasm. The catalysed reaction is 2 D-alanine + ATP = D-alanyl-D-alanine + ADP + phosphate + H(+). The protein operates within cell wall biogenesis; peptidoglycan biosynthesis. In terms of biological role, cell wall formation. This is D-alanine--D-alanine ligase from Haemophilus influenzae (strain PittEE).